A 317-amino-acid chain; its full sequence is Acetyl-coenzyme A carboxylase carboxyl transferase subunit alpha (317 aa).

The CoA carboxyltransferase C-terminal domain maps to 33–294; it reads NLDDEIARLQ…KQRLLEDLAD (262 aa).

It belongs to the AccA family. In terms of assembly, acetyl-CoA carboxylase is a heterohexamer composed of biotin carboxyl carrier protein (AccB), biotin carboxylase (AccC) and two subunits each of ACCase subunit alpha (AccA) and ACCase subunit beta (AccD).

It is found in the cytoplasm. The catalysed reaction is N(6)-carboxybiotinyl-L-lysyl-[protein] + acetyl-CoA = N(6)-biotinyl-L-lysyl-[protein] + malonyl-CoA. It participates in lipid metabolism; malonyl-CoA biosynthesis; malonyl-CoA from acetyl-CoA: step 1/1. Functionally, component of the acetyl coenzyme A carboxylase (ACC) complex. First, biotin carboxylase catalyzes the carboxylation of biotin on its carrier protein (BCCP) and then the CO(2) group is transferred by the carboxyltransferase to acetyl-CoA to form malonyl-CoA. The protein is Acetyl-coenzyme A carboxylase carboxyl transferase subunit alpha of Glaesserella parasuis serovar 5 (strain SH0165) (Haemophilus parasuis).